Reading from the N-terminus, the 414-residue chain is uncharacterized protein (414 aa).

The signal sequence occupies residues 1–20 (MKKLLAIGILCIMVTAVMSG). C21 carries the S-archaeol cysteine lipid modification. Positions 119–389 (RVIVMSSTEI…DLATILHPEA (271 aa)) constitute a Fe/B12 periplasmic-binding domain.

The protein resides in the cell membrane. This is an uncharacterized protein from Methanocaldococcus jannaschii (strain ATCC 43067 / DSM 2661 / JAL-1 / JCM 10045 / NBRC 100440) (Methanococcus jannaschii).